Reading from the N-terminus, the 187-residue chain is Early nodulin-55-2 (187 aa).

Residues 1–26 (MASCLPNASPFLVMLAMCLLISTSEA) form the signal peptide. The Phytocyanin domain occupies 27-132 (EKYVVGGSEK…GLKLAVLVIS (106 aa)). N-linked (GlcNAc...) asparagine glycosylation is found at Asn78, Asn116, and Asn134. Cys85 and Cys120 are disulfide-bonded. The tract at residues 138–167 (KNLLSPSPSPSPPPSSLLSPSPSPLPNNQG) is disordered. Over residues 144–162 (SPSPSPPPSSLLSPSPSPL) the composition is skewed to pro residues.

The protein belongs to the early nodulin-like (ENODL) family.

It is found in the symbiosome. The protein resides in the peribacteroid membrane. Functionally, may act as a carbohydrate transporter. This Glycine max (Soybean) protein is Early nodulin-55-2.